Reading from the N-terminus, the 211-residue chain is tRNA (guanine-N(7)-)-methyltransferase (211 aa).

The S-adenosyl-L-methionine site is built by Glu-44, Asp-69, Asp-96, and Asp-118. Asp-118 is a catalytic residue. A substrate-binding site is contributed by Lys-122. Residues 124–129 (RHEKRR) form an interaction with RNA region. Substrate is bound by residues Asp-154 and 191 to 194 (TEYE).

This sequence belongs to the class I-like SAM-binding methyltransferase superfamily. TrmB family.

It catalyses the reaction guanosine(46) in tRNA + S-adenosyl-L-methionine = N(7)-methylguanosine(46) in tRNA + S-adenosyl-L-homocysteine. It functions in the pathway tRNA modification; N(7)-methylguanine-tRNA biosynthesis. Its function is as follows. Catalyzes the formation of N(7)-methylguanine at position 46 (m7G46) in tRNA. In Streptococcus equi subsp. equi (strain 4047), this protein is tRNA (guanine-N(7)-)-methyltransferase.